The chain runs to 221 residues: Imidazoleglycerol-phosphate dehydratase (221 aa).

It belongs to the imidazoleglycerol-phosphate dehydratase family.

It catalyses the reaction D-erythro-1-(imidazol-4-yl)glycerol 3-phosphate = 3-(imidazol-4-yl)-2-oxopropyl phosphate + H2O. The protein operates within amino-acid biosynthesis; L-histidine biosynthesis; L-histidine from 5-phospho-alpha-D-ribose 1-diphosphate: step 6/9. This is Imidazoleglycerol-phosphate dehydratase (HIS3) from Kluyveromyces lactis (strain ATCC 8585 / CBS 2359 / DSM 70799 / NBRC 1267 / NRRL Y-1140 / WM37) (Yeast).